The chain runs to 464 residues: Synaptosomal-associated protein 47 (464 aa).

The tract at residues 20–42 is disordered; sequence GRLWDSSGVPQRQKRPGPWRTQT. 2 t-SNARE coiled-coil homology domains span residues 154-216 and 401-463; these read VADA…LTEL and TSLP…MKRL.

Belongs to the SVAP1 family. Forms a complex containing SNAP47, VAMP2 and STX1A. Associates with the BLOC-1 complex. Interacts with BLOC1S6.

It localises to the endomembrane system. The protein localises to the cytoplasm. The protein resides in the perinuclear region. Functionally, plays a role in intracellular membrane fusion. The chain is Synaptosomal-associated protein 47 (SNAP47) from Homo sapiens (Human).